A 625-amino-acid polypeptide reads, in one-letter code: PTS system beta-glucoside-specific EIIBCA component (625 aa).

Residues 1–84 (MTELARKIVA…NSVAGLDEKA (84 aa)) enclose the PTS EIIB type-1 domain. Residues 1–99 (MTELARKIVA…NDDKGNLLNR (99 aa)) are Periplasmic-facing. The active-site Phosphocysteine intermediate; for EIIB activity is the C24. Residues 100–120 (FVYVISGIFTPLIGLMAATGI) form a helical membrane-spanning segment. Residues 102–465 (YVISGIFTPL…RQPAQGAPQE (364 aa)) form the PTS EIIC type-1 domain. Residues 121–140 (LKGMLALALTFQWTTEQSGT) lie on the Cytoplasmic side of the membrane. The helical transmembrane segment at 141–161 (YLILFSASDALFWFFPIILGY) threads the bilayer. At 162–166 (TAGKR) the chain is on the periplasmic side. The chain crosses the membrane as a helical span at residues 167–187 (FGGNPFTAMVIGGALVHPLIL). Residues 188–202 (TAFENGQKADALGLD) are Cytoplasmic-facing. The helical transmembrane segment at 203–223 (FLGIPVTLLNYSSSVIPIIFS) threads the bilayer. Topologically, residues 224–244 (AWLCSILERRLNAWLPSAIKN) are periplasmic. The helical transmembrane segment at 245–265 (FFTPLLCLMVITPVTFLLVGP) threads the bilayer. At 266-284 (LSTWISELIAAGYLWLYQA) the chain is on the cytoplasmic side. A helical transmembrane segment spans residues 285–305 (VPAFAGAVMGGFWQIFVMFGL). Over 306-324 (HWGLVPLCINNFTVLGYDT) the chain is Periplasmic. The helical transmembrane segment at 325-345 (MIPLLMPAIMAQVGAALGVFL) threads the bilayer. The Cytoplasmic segment spans residues 346 to 353 (CERDAQKK). The chain crosses the membrane as a helical span at residues 354 to 374 (VVAGSAALTSLFGITEPAVYG). Topologically, residues 375–380 (VNLPRK) are periplasmic. Residues 381–401 (YPFVIACISGALGATIIGYAQ) form a helical membrane-spanning segment. At 402 to 403 (TK) the chain is on the cytoplasmic side. A helical transmembrane segment spans residues 404–424 (VYSFGLPSIFTFMQTIPSTGI). Over 425 to 431 (DFTVWAS) the chain is Periplasmic. A helical transmembrane segment spans residues 432–452 (VIGGVIAIGCAFVGTVMLHFI). Over 453–625 (TAKRQPAQGA…AGEPLLSIIR (173 aa)) the chain is Cytoplasmic. The region spanning 495–599 (DTTFASGLLG…DLTTPVLISN (105 aa)) is the PTS EIIA type-1 domain. The Tele-phosphohistidine intermediate; for EIIA activity role is filled by H547.

The protein resides in the cell inner membrane. Functionally, the phosphoenolpyruvate-dependent sugar phosphotransferase system (sugar PTS), a major carbohydrate active -transport system, catalyzes the phosphorylation of incoming sugar substrates concomitantly with their translocation across the cell membrane. This system is involved in beta-glucoside transport. Its function is as follows. Acts both as a kinase and as a phosphatase on BglG. The polypeptide is PTS system beta-glucoside-specific EIIBCA component (bglF) (Escherichia coli (strain K12)).